The chain runs to 525 residues: GMP synthase [glutamine-hydrolyzing] (525 aa).

Residues 9–207 (RILILDFGSQ…VLDICQCEAL (199 aa)) form the Glutamine amidotransferase type-1 domain. C86 functions as the Nucleophile in the catalytic mechanism. Active-site residues include H181 and E183. Residues 208–400 (WTPAKIIDDA…LGLPYNMLYR (193 aa)) enclose the GMPS ATP-PPase domain. 235-241 (SGGVDSS) contributes to the ATP binding site.

Homodimer.

It catalyses the reaction XMP + L-glutamine + ATP + H2O = GMP + L-glutamate + AMP + diphosphate + 2 H(+). It participates in purine metabolism; GMP biosynthesis; GMP from XMP (L-Gln route): step 1/1. Functionally, catalyzes the synthesis of GMP from XMP. In Pectobacterium atrosepticum (strain SCRI 1043 / ATCC BAA-672) (Erwinia carotovora subsp. atroseptica), this protein is GMP synthase [glutamine-hydrolyzing].